Consider the following 423-residue polypeptide: Anhydromevalonate phosphate decarboxylase (423 aa).

Asn-134 and Glu-197 together coordinate Mn(2+). The Proton acceptor role is filled by Asp-245.

It belongs to the UbiD family. It depends on prenylated FMN as a cofactor. Requires Mn(2+) as cofactor.

It carries out the reaction (2E)-3-methyl-5-phosphooxypent-2-enoate + H(+) = isopentenyl phosphate + CO2. It functions in the pathway isoprenoid biosynthesis; isopentenyl diphosphate biosynthesis via mevalonate pathway. Functionally, catalyzes the conversion of trans-anhydromevalonate 5-phosphate (tAHMP) into isopentenyl phosphate. Involved in the archaeal mevalonate (MVA) pathway, which provides fundamental precursors for isoprenoid biosynthesis, such as isopentenyl diphosphate (IPP) and dimethylallyl diphosphate (DMAPP). This is Anhydromevalonate phosphate decarboxylase from Methanothermobacter thermautotrophicus (strain ATCC 29096 / DSM 1053 / JCM 10044 / NBRC 100330 / Delta H) (Methanobacterium thermoautotrophicum).